The primary structure comprises 342 residues: Terpene cyclase resF (342 aa).

The next 5 membrane-spanning stretches (helical) occupy residues 5 to 25 (VSVV…GVFA), 81 to 101 (FMAQ…TEDF), 115 to 135 (WGVF…GVCF), 151 to 171 (STWI…MLIF), and 182 to 202 (IWGV…ASLL). The N-linked (GlcNAc...) asparagine glycan is linked to N224. The next 3 helical transmembrane spans lie at 229-249 (YVVA…FHLG), 269-289 (FLQI…WHEL), and 305-325 (YLLL…AWAL).

Belongs to the membrane-bound ascI terpene cyclase family.

The protein localises to the membrane. It functions in the pathway antifungal biosynthesis. In terms of biological role, cyclase; part of the gene cluster that mediates the biosynthesis of the tetrahydropyranyl antifungal agent restricticin that acts as an inhibitor of CYP51 and blocks the ergosterol biosynthesis. The highly reducing polyketide synthase resH, the short chain dehydrogenase resG, the cyclase resF, the FAD-dependent monooxygenase resA and the enoylreductase resD are required to generate the first stable intermediate desmethylrestrictinol. ResH with resD biosynthesize the first polyketide chain intermediate that is reduced by resG, followed by epoxidation by resA before 6-endo cyclization via epoxide opening by resF leads to desmethylrestrictinol. The methyltransferase resE then catalyzes the C4 O-methylation of desmethylrestrictinol to produce restrictinol, and the nonribosomal peptide synthetase resC catalyzes the C3 esterification of restrictinol with glycine that leads to restricticin. The chain is Terpene cyclase resF from Aspergillus sclerotiorum.